Consider the following 504-residue polypeptide: Signal recognition particle receptor FtsY (504 aa).

2 disordered regions span residues 1–71 and 116–135; these read MFNW…DDYL and ESDQ…TEIT. Residues 308–315, 391–395, and 455–458 contribute to the GTP site; these read GVNGAGKT, DTAGR, and TKLD.

This sequence belongs to the GTP-binding SRP family. FtsY subfamily. Part of the signal recognition particle protein translocation system, which is composed of SRP and FtsY.

The protein resides in the cell inner membrane. It localises to the cytoplasm. It carries out the reaction GTP + H2O = GDP + phosphate + H(+). In terms of biological role, involved in targeting and insertion of nascent membrane proteins into the cytoplasmic membrane. Acts as a receptor for the complex formed by the signal recognition particle (SRP) and the ribosome-nascent chain (RNC). In Synechocystis sp. (strain ATCC 27184 / PCC 6803 / Kazusa), this protein is Signal recognition particle receptor FtsY.